We begin with the raw amino-acid sequence, 346 residues long: Peroxidase 19 (346 aa).

The signal sequence occupies residues 1–31 (MHVISLSLSSIFFFLFLTSTILISPVQPTTS). Intrachain disulfides connect C51/C134, C84/C89, C140/C342, and C219/C251. The active-site Proton acceptor is H82. Ca(2+)-binding residues include D83, V86, G88, D90, and S92. P182 serves as a coordination point for substrate. N185 carries an N-linked (GlcNAc...) asparagine glycan. H212 lines the heme b pocket. T213 contributes to the Ca(2+) binding site. Ca(2+)-binding residues include D265, T268, and D273.

This sequence belongs to the peroxidase family. Classical plant (class III) peroxidase subfamily. It depends on heme b as a cofactor. Ca(2+) is required as a cofactor.

The protein resides in the secreted. It catalyses the reaction 2 a phenolic donor + H2O2 = 2 a phenolic radical donor + 2 H2O. Removal of H(2)O(2), oxidation of toxic reductants, biosynthesis and degradation of lignin, suberization, auxin catabolism, response to environmental stresses such as wounding, pathogen attack and oxidative stress. These functions might be dependent on each isozyme/isoform in each plant tissue. This Arabidopsis thaliana (Mouse-ear cress) protein is Peroxidase 19 (PER19).